The sequence spans 596 residues: Elongation factor 4 (596 aa).

The 183-residue stretch at 2 to 184 (KHIRNFSIIA…EIIAKIPPPV (183 aa)) folds into the tr-type G domain. Residues 14–19 (DHGKST) and 131–134 (NKID) contribute to the GTP site.

It belongs to the TRAFAC class translation factor GTPase superfamily. Classic translation factor GTPase family. LepA subfamily.

It localises to the cell inner membrane. It carries out the reaction GTP + H2O = GDP + phosphate + H(+). In terms of biological role, required for accurate and efficient protein synthesis under certain stress conditions. May act as a fidelity factor of the translation reaction, by catalyzing a one-codon backward translocation of tRNAs on improperly translocated ribosomes. Back-translocation proceeds from a post-translocation (POST) complex to a pre-translocation (PRE) complex, thus giving elongation factor G a second chance to translocate the tRNAs correctly. Binds to ribosomes in a GTP-dependent manner. The chain is Elongation factor 4 from Shewanella frigidimarina (strain NCIMB 400).